A 253-amino-acid polypeptide reads, in one-letter code: MTTSRCSHLPEVLPDCTGSAAPVVKTVEDCGSLVNGQPQYVMQVSAKDGQLLSTVVRTLATQSPFNDRPMCRICHEGSSQEDLLSPCECTGTLGTIHRSCLEHWLSSSNTSYCELCHFRFAVERKPRPLVEWLRNPGPQHEKRTLFGDMVCFLFITPLATISGWLCLRGAVDHLHFSSRLEAVGLIALTVALFTIYLFWTLVSFRYHCRLYNEWRRTNQRVILLIPKSVNIPSNQQSLLGLHSAKRNSKETIV.

The RING-CH-type zinc-finger motif lies at 63–123 (SPFNDRPMCR…ELCHFRFAVE (61 aa)). Zn(2+) is bound by residues cysteine 71, cysteine 74, cysteine 87, cysteine 89, histidine 97, cysteine 100, cysteine 113, and cysteine 116. 2 consecutive transmembrane segments (helical) span residues 145–165 (LFGDMVCFLFITPLATISGWL) and 182–202 (AVGLIALTVALFTIYLFWTLV). Serine 237 and serine 243 each carry phosphoserine.

In terms of assembly, interacts with MARCHF2 and STX6.

The protein resides in the cytoplasmic vesicle membrane. The protein localises to the early endosome membrane. It carries out the reaction S-ubiquitinyl-[E2 ubiquitin-conjugating enzyme]-L-cysteine + [acceptor protein]-L-lysine = [E2 ubiquitin-conjugating enzyme]-L-cysteine + N(6)-ubiquitinyl-[acceptor protein]-L-lysine.. Its pathway is protein modification; protein ubiquitination. In terms of biological role, E3 ubiquitin-protein ligase which may be involved in endosomal trafficking. E3 ubiquitin ligases accept ubiquitin from an E2 ubiquitin-conjugating enzyme in the form of a thioester and then directly transfer the ubiquitin to targeted substrates. The sequence is that of E3 ubiquitin-protein ligase MARCHF3 (MARCHF3) from Bos taurus (Bovine).